A 762-amino-acid chain; its full sequence is cGMP-dependent protein kinase 2 (762 aa).

Positions 1-25 (MGNGSVKPKHSKHPDGHSGNLTTDA) are disordered. Glycine 2 carries N-myristoyl glycine lipidation. Positions 23-85 (TDALRNKVTE…CIQLNKLQDV (63 aa)) form a coiled coil. Phosphoserine is present on residues serine 110 and serine 117. The disordered stretch occupies residues 117 to 138 (SRRGAKAGVSAEPTTRTYDLNK). The cGMP-binding, high affinity; cAMP-binding, moderate affinity stretch occupies residues 168 to 283 (FLKRLDPQQI…DEQYRNFLRS (116 aa)). 3',5'-cyclic AMP-binding positions include 232-235 (GELA) and 242-243 (RT). 3',5'-cyclic GMP contacts are provided by residues 232-235 (GELA), 242-243 (RT), lysine 347, 356-359 (GEKA), 366-367 (RS), aspartate 412, and arginine 415. The interval 286–416 (LLKNLPEDKL…NLNRDDEKRH (131 aa)) is cGMP-binding, high affinity; cAMP-binding, low affinity. The residue at position 431 (serine 431) is a Phosphoserine. The region spanning 453 to 711 (LEIIATLGVG…INDIKKHRWL (259 aa)) is the Protein kinase domain. Residues 459–467 (LGVGGFGRV) and lysine 482 each bind ATP. Aspartate 576 acts as the Proton acceptor in catalysis. Threonine 609 is modified (phosphothreonine). Positions 712-762 (NGFNWEGLKARSLPSPLQRELKGPIDHSYFDKYPPEKGMPPDELSGWDKDF) constitute an AGC-kinase C-terminal domain. Residues 740 to 762 (YFDKYPPEKGMPPDELSGWDKDF) are disordered.

This sequence belongs to the protein kinase superfamily. AGC Ser/Thr protein kinase family. cGMP subfamily. Interacts with GRIA1/GLUR1. Post-translationally, myristoylation mediates membrane localization. As to expression, highly concentrated in brain, lung and intestinal mucosa.

It localises to the apical cell membrane. It carries out the reaction L-seryl-[protein] + ATP = O-phospho-L-seryl-[protein] + ADP + H(+). The enzyme catalyses L-threonyl-[protein] + ATP = O-phospho-L-threonyl-[protein] + ADP + H(+). Binding of cGMP results in enzyme activation. Crucial regulator of intestinal secretion and bone growth. Phosphorylates and activates CFTR on the plasma membrane. Plays a key role in intestinal secretion by regulating cGMP-dependent translocation of CFTR in jejunum. Acts downstream of NMDAR to activate the plasma membrane accumulation of GRIA1/GLUR1 in synapse and increase synaptic plasticity. Phosphorylates GRIA1/GLUR1 at Ser-863. Acts as a regulator of gene expression and activator of the extracellular signal-regulated kinases MAPK3/ERK1 and MAPK1/ERK2 in mechanically stimulated osteoblasts. Under fluid shear stress, mediates ERK activation and subsequent induction of FOS, FOSL1/FRA1, FOSL2/FRA2 and FOSB that play a key role in the osteoblast anabolic response to mechanical stimulation. This chain is cGMP-dependent protein kinase 2 (PRKG2), found in Homo sapiens (Human).